The sequence spans 1037 residues: Importin-8 (1037 aa).

The region spanning 22-102 (AENELNQSYK…RDNIVEGIIR (81 aa)) is the Importin N-terminal domain. The segment covering 886–895 (DRSKAEKADM) has biased composition (basic and acidic residues). Positions 886–934 (DRSKAEKADMEENEEISSDEEETNVTAQAMQSNNGRGEDEEEEDDDWDE) are disordered. Residues 896 to 908 (EENEEISSDEEET) show a composition bias toward acidic residues. Ser-902 and Ser-903 each carry phosphoserine. Over residues 909–920 (NVTAQAMQSNNG) the composition is skewed to polar residues. Acidic residues predominate over residues 923–934 (EDEEEEDDDWDE).

The protein belongs to the importin beta family. In terms of assembly, forms a heterodimer with KPNB1. Interacts with SRP19. Interacts with RPL23A. Binds directly to nuclear pore complexes. Interacts with LRPPRC; the interaction occurs when LRPPRC is in its RNA-free form and promotes import of LRPPRC to the nucleus to allow for EIF4E-mediated export of mRNAS from the nucleus to the cytoplasm.

The protein localises to the cytoplasm. It localises to the nucleus. Its function is as follows. Involved in nuclear protein import, either by acting as autonomous nuclear transport receptor or as an adapter-like protein in association with the importin-beta subunit KPNB1. Acting autonomously, may serve as receptor for nuclear localization signals (NLS) and promote translocation of import substrates through the nuclear pore complex (NPC) by an energy requiring, Ran-dependent mechanism. At the nucleoplasmic side of the NPC, Ran binds to importin, the importin/substrate complex dissociates and importin is re-exported from the nucleus to the cytoplasm where GTP hydrolysis releases Ran. The directionality of nuclear import is thought to be conferred by an asymmetric distribution of the GTP- and GDP-bound forms of Ran between the cytoplasm and nucleus. In vitro mediates the nuclear import of the signal recognition particle protein SRP19. May also be involved in cytoplasm-to-nucleus shuttling of a broad spectrum of other cargos, including Argonaute-microRNAs complexes, the JUN protein, RELA/NF-kappa-B p65 subunit, the translation initiation factor EIF4E and a set of receptor-activated mothers against decapentaplegic homolog (SMAD) transcription factors that play a critical role downstream of the large family of transforming growth factor beta and bone morphogenetic protein (BMP) cytokines. The chain is Importin-8 (IPO8) from Homo sapiens (Human).